The sequence spans 364 residues: Aminomethyltransferase (364 aa).

This sequence belongs to the GcvT family. In terms of assembly, the glycine cleavage system is composed of four proteins: P, T, L and H.

The enzyme catalyses N(6)-[(R)-S(8)-aminomethyldihydrolipoyl]-L-lysyl-[protein] + (6S)-5,6,7,8-tetrahydrofolate = N(6)-[(R)-dihydrolipoyl]-L-lysyl-[protein] + (6R)-5,10-methylene-5,6,7,8-tetrahydrofolate + NH4(+). Its function is as follows. The glycine cleavage system catalyzes the degradation of glycine. In Shewanella baltica (strain OS155 / ATCC BAA-1091), this protein is Aminomethyltransferase.